Consider the following 559-residue polypeptide: 2,3-bisphosphoglycerate-independent phosphoglycerate mutase (559 aa).

Mn(2+)-binding residues include Asp-28 and Ser-81. The Phosphoserine intermediate role is filled by Ser-81. Substrate is bound by residues His-140, 170 to 171 (RD), Arg-206, Arg-213, 286 to 289 (RADR), and Lys-361. Residues Asp-430, His-434, Asp-471, His-472, and His-501 each coordinate Mn(2+).

The protein belongs to the BPG-independent phosphoglycerate mutase family. Monomer. Mn(2+) serves as cofactor. The N-terminus is blocked. In terms of tissue distribution, found ubiquitously in germinating seed.

The protein resides in the cytoplasm. The enzyme catalyses (2R)-2-phosphoglycerate = (2R)-3-phosphoglycerate. It functions in the pathway carbohydrate degradation; glycolysis; pyruvate from D-glyceraldehyde 3-phosphate: step 3/5. Catalyzes the interconversion of 2-phosphoglycerate and 3-phosphoglycerate. This chain is 2,3-bisphosphoglycerate-independent phosphoglycerate mutase, found in Zea mays (Maize).